The primary structure comprises 303 residues: Terpene synthase (303 aa).

Mg(2+) is bound by residues Asp-69 and Asp-73. Residues 69–73 (DDIQD) carry the DDXXD motif motif.

It belongs to the FPP/GGPP synthase family. Requires Mg(2+) as cofactor.

The catalysed reaction is (2E)-geranyl diphosphate + H2O = (2E)-geraniol + diphosphate. Its function is as follows. Terpene synthase that is able to convert geraniol diphosphate to geraniol in tea leaves. The protein is Terpene synthase of Matsumurasca onukii (Tea green leafhopper).